The chain runs to 195 residues: Peptidyl-tRNA hydrolase (195 aa).

Tyrosine 17 is a binding site for tRNA. Histidine 22 (proton acceptor) is an active-site residue. TRNA contacts are provided by phenylalanine 68, asparagine 70, and asparagine 116.

The protein belongs to the PTH family. In terms of assembly, monomer.

It is found in the cytoplasm. It carries out the reaction an N-acyl-L-alpha-aminoacyl-tRNA + H2O = an N-acyl-L-amino acid + a tRNA + H(+). Hydrolyzes ribosome-free peptidyl-tRNAs (with 1 or more amino acids incorporated), which drop off the ribosome during protein synthesis, or as a result of ribosome stalling. In terms of biological role, catalyzes the release of premature peptidyl moieties from peptidyl-tRNA molecules trapped in stalled 50S ribosomal subunits, and thus maintains levels of free tRNAs and 50S ribosomes. This Erwinia tasmaniensis (strain DSM 17950 / CFBP 7177 / CIP 109463 / NCPPB 4357 / Et1/99) protein is Peptidyl-tRNA hydrolase.